A 143-amino-acid polypeptide reads, in one-letter code: MAKKVAGQLKLQVKAGSANPSPPIGPALGQRGINIMEFCKAFNAATQEMEKGMPIPVVITYYQDKSFTFVMKQPPVSYFLKKEAKIQSGSKTPGKGAKAGTLTRAQVQSIAQAKMKDLNAADIEGAMAMIEGSARAMGLEVVG.

This sequence belongs to the universal ribosomal protein uL11 family. Part of the ribosomal stalk of the 50S ribosomal subunit. Interacts with L10 and the large rRNA to form the base of the stalk. L10 forms an elongated spine to which L12 dimers bind in a sequential fashion forming a multimeric L10(L12)X complex. One or more lysine residues are methylated.

Its function is as follows. Forms part of the ribosomal stalk which helps the ribosome interact with GTP-bound translation factors. The sequence is that of Large ribosomal subunit protein uL11 from Rhizobium rhizogenes (strain K84 / ATCC BAA-868) (Agrobacterium radiobacter).